The primary structure comprises 70 residues: MAFLKKSLFLVLFLGLVNLSICEEEKREEENKEEEDENEALSEVKRGFLEKLKTGAKDFASAFVNSIKGT.

A signal peptide spans 1–22 (MAFLKKSLFLVLFLGLVNLSIC). Residues 23–46 (EEEKREEENKEEEDENEALSEVKR) constitute a propeptide that is removed on maturation. The residue at position 68 (Lys-68) is a Lysine amide.

It belongs to the frog skin active peptide (FSAP) family. Frenatin subfamily. In terms of tissue distribution, expressed by the skin glands.

Its subcellular location is the secreted. The protein resides in the target cell membrane. Functionally, peptide with unknown function. Does not show antimicrobial activity against S.aureus (MIC&gt;512 ug/mL), E.coli (MIC&gt;512 ug/mL) and C.albicans (MIC&gt;512 ug/mL). Does not show hemolytic activity. In terms of biological role, antimicrobial peptide with activity against E.coli (MIC=128 ug/mL or 54 uM) and C.albicans (MIC=256 ug/mL or 108 uM). Does not show activity against S.aureus (MIC&gt;512 ug/mL). Does not show hemolytic activity. The chain is Frenatin 4.1 from Nyctimystes infrafrenatus (White-lipped tree frog).